A 473-amino-acid polypeptide reads, in one-letter code: H(+)/Cl(-) exchange transporter ClcA (473 aa).

Residues 1–32 (MKTDTSTFLAQQIVRLRRRDQIRRLMQRDKTP) lie on the Cytoplasmic side of the membrane. Residues 33 to 69 (LAILLMAAVVGTLTGLVGVAFEKAVSWVQNMRIGALV) form a helical membrane-spanning segment. Over 70-76 (QVADHAF) the chain is Periplasmic. Residues 77–100 (LLWPLAFILSALLAMVGYFLVRKF) traverse the membrane as a helical segment. The Selectivity filter part_1 signature appears at 106–110 (GSGIP). S107 contributes to the chloride binding site. The helical intramembrane region spans 109 to 116 (IPEIEGAL). Over 117–123 (EELRPVR) the chain is Cytoplasmic. 2 consecutive transmembrane segments (helical) span residues 124 to 141 (WWRV…TLGA) and 148 to 166 (EGPT…LDVF). The Selectivity filter part_2 motif lies at 146–150 (GREGP). The Cytoplasmic segment spans residues 167–176 (RMRSAEARHT). 2 consecutive intramembrane regions (helical) follow at residues 177 to 189 (LLAT…LSAA) and 193 to 201 (PLAGILFII). The Cytoplasmic portion of the chain corresponds to 202–214 (EEMRPQFRYNLIS). A helical transmembrane segment spans residues 215–232 (IKAVFTGVIMSSIVFRIF). Topologically, residues 233-252 (NGEAPIIEVGKLSDAPVNTL) are periplasmic. A helical transmembrane segment spans residues 253 to 281 (WLYLILGIIFGCVGPVFNSLVLRTQDMFQ). At 282–287 (RFHGGE) the chain is on the cytoplasmic side. The chain crosses the membrane as a helical span at residues 288-309 (IKKWVLMGGAIGGLCGILGLIE). Residues 310 to 329 (PEAAGGGFNLIPIAAAGNFS) are Periplasmic-facing. A run of 2 helical transmembrane segments spans residues 330-349 (VGLL…LCFS) and 355-376 (GIFA…MAAA). The Selectivity filter part_3 signature appears at 355-359 (GIFAP). Chloride-binding residues include I356 and F357. The Periplasmic portion of the chain corresponds to 377 to 386 (VLFPQYHLEA). Positions 387-401 (GTFAIAGMGALMAAS) form an intramembrane region, helical. Residues 402–404 (VRA) constitute an intramembrane region (note=Loop between two helices). Residues 405–416 (PLTGIVLVLEMT) constitute an intramembrane region (helical). The segment at residues 417-421 (DNYQL) is an intramembrane region (note=Loop between two helices). Residues 422-438 (ILPMIITCLGATLLAQF) form a helical membrane-spanning segment. Residues 439–473 (LGGKPLYSTILARTLAKQDAEQAAKNQNAPAGENT) lie on the Cytoplasmic side of the membrane. A chloride-binding site is contributed by Y445.

This sequence belongs to the chloride channel (TC 2.A.49) family. ClcA subfamily. In terms of assembly, homodimer.

It localises to the cell inner membrane. The catalysed reaction is 2 chloride(in) + H(+)(out) = 2 chloride(out) + H(+)(in). Functionally, proton-coupled chloride transporter. Functions as antiport system and exchanges two chloride ions for 1 proton. Probably acts as an electrical shunt for an outwardly-directed proton pump that is linked to amino acid decarboxylation, as part of the extreme acid resistance (XAR) response. The sequence is that of H(+)/Cl(-) exchange transporter ClcA from Salmonella newport (strain SL254).